A 131-amino-acid polypeptide reads, in one-letter code: Rhodopsin (131 aa).

At 1–16 (CGIDYYTRAPGYNNES) the chain is on the extracellular side. N14 is a glycosylation site (N-linked (GlcNAc...) asparagine). Residues 17–38 (FVIYMFIVHFLIPLFIISFCYG) form a helical membrane-spanning segment. Residues 39 to 66 (NLLCAVKAAAAAQEESETTQRAEREVTR) are Cytoplasmic-facing. The chain crosses the membrane as a helical span at residues 67–88 (MVIMMVISYLVSWVPYASVAWY). At 89 to 100 (IFSNQGSEFGPV) the chain is on the extracellular side. Residues 101–122 (FMTIPAFFAKSSALYNPLIYVL) traverse the membrane as a helical segment. Residue K110 is modified to N6-(retinylidene)lysine. The Cytoplasmic portion of the chain corresponds to 123 to 131 (MNKQFRHCM).

Belongs to the G-protein coupled receptor 1 family. Opsin subfamily. Post-translationally, phosphorylated on some or all of the serine and threonine residues present in the C-terminal region. Contains one covalently linked retinal chromophore.

Its subcellular location is the membrane. It localises to the cell projection. The protein localises to the cilium. It is found in the photoreceptor outer segment. Photoreceptor required for image-forming vision at low light intensity. While most salt water fish species use retinal as chromophore, most freshwater fish use 3-dehydroretinal, or a mixture of retinal and 3-dehydroretinal. Light-induced isomerization of 11-cis to all-trans retinal triggers a conformational change that activates signaling via G-proteins. Subsequent receptor phosphorylation mediates displacement of the bound G-protein alpha subunit by arrestin and terminates signaling. This chain is Rhodopsin (rho), found in Coregonus autumnalis (Arctic cisco).